The following is a 281-amino-acid chain: Lectin (281 aa).

A signal peptide spans 1 to 26 (MATYKLCSVLALSLTLFLLILNKVNS). Asn-43 and Asn-139 each carry an N-linked (GlcNAc...) asparagine glycan. Residues 269-281 (AVIPTSNHNTFAI) constitute a propeptide that is removed on maturation.

It belongs to the leguminous lectin family. In terms of assembly, homodimer. In terms of processing, a minor C-terminal proteolytic processing site is observed at position 268.

Functionally, galactose and N-acetyllactosamine specific lectin. Binds to the H-2 blood type determinant fucosyl-N-acetyllactosamine. In Erythrina corallodendron (Coral tree), this protein is Lectin.